Consider the following 331-residue polypeptide: Flagellar P-ring protein (331 aa).

A signal peptide spans 1–25; sequence MKKRLAVLLVIVLTITFSFSVTTRI.

This sequence belongs to the FlgI family. In terms of assembly, the basal body constitutes a major portion of the flagellar organelle and consists of four rings (L,P,S, and M) mounted on a central rod.

The protein resides in the periplasm. Its subcellular location is the bacterial flagellum basal body. Its function is as follows. Assembles around the rod to form the L-ring and probably protects the motor/basal body from shearing forces during rotation. The sequence is that of Flagellar P-ring protein from Thermotoga petrophila (strain ATCC BAA-488 / DSM 13995 / JCM 10881 / RKU-1).